A 284-amino-acid chain; its full sequence is 2-dehydro-3-deoxyphosphooctonate aldolase (284 aa).

The protein belongs to the KdsA family.

Its subcellular location is the cytoplasm. The enzyme catalyses D-arabinose 5-phosphate + phosphoenolpyruvate + H2O = 3-deoxy-alpha-D-manno-2-octulosonate-8-phosphate + phosphate. Its pathway is carbohydrate biosynthesis; 3-deoxy-D-manno-octulosonate biosynthesis; 3-deoxy-D-manno-octulosonate from D-ribulose 5-phosphate: step 2/3. The protein operates within bacterial outer membrane biogenesis; lipopolysaccharide biosynthesis. This Escherichia coli O157:H7 protein is 2-dehydro-3-deoxyphosphooctonate aldolase.